Reading from the N-terminus, the 506-residue chain is ATP synthase subunit alpha (506 aa).

The span at 119–129 (GPIEYEGKRPI) shows a compositional bias: basic and acidic residues. A disordered region spans residues 119–138 (GPIEYEGKRPIESPAPPIVR). 169-176 (GDRQTGKT) lines the ATP pocket.

It belongs to the ATPase alpha/beta chains family. As to quaternary structure, F-type ATPases have 2 components, CF(1) - the catalytic core - and CF(0) - the membrane proton channel. CF(1) has five subunits: alpha(3), beta(3), gamma(1), delta(1), epsilon(1). CF(0) has three main subunits: a(1), b(2) and c(9-12). The alpha and beta chains form an alternating ring which encloses part of the gamma chain. CF(1) is attached to CF(0) by a central stalk formed by the gamma and epsilon chains, while a peripheral stalk is formed by the delta and b chains.

The protein resides in the cell membrane. It carries out the reaction ATP + H2O + 4 H(+)(in) = ADP + phosphate + 5 H(+)(out). Functionally, produces ATP from ADP in the presence of a proton gradient across the membrane. The alpha chain is a regulatory subunit. The polypeptide is ATP synthase subunit alpha (Caldanaerobacter subterraneus subsp. tengcongensis (strain DSM 15242 / JCM 11007 / NBRC 100824 / MB4) (Thermoanaerobacter tengcongensis)).